The primary structure comprises 543 residues: MPKVLLHDIEARRALARGVQKLAAAIESTLGPKGMNAMVDRPIGTPIVSRDGVTIASEIELPDRFENMGAQVVREVSMQTNEVAGDGTTTAMVLANGLIQGGVAALERGAKAVDLCKGIDRAVEVVVESLKSAAIPVSDRRTLQAVATIASTDSHLGDLIAEAVERVGKDGIISSDYGLTTSTTLEVVEGMSFDRGYISHHMVTDVEKMEVVLEQPYILLTDLKIKAPGELAAVRARVAETGKPLVIVAEEIAPEVVVTLLGEGNRGKVLVVNPPDYGHWRKAMMDDLAIITGGRVIARELGGMLEEASLADLGTARQVRASARETVIIRGGGDDAAIAARRQQVAKQHDLAPPNIEQDKLKERLAKLSGGTAVIFAGGVTPVEQKRTIQLIDDALSAARAAAEEGIVPGGGTALAQCAPVVVRALGNINGDLGEGIKLVRETLSRPAAFIARNAGHDAAKVVAELQSSRAGVGFDAANGVFIDMVSAGIVDPVRVTYTALRNAASVATLVLTTNTLVADVPEYVDPTQGPALGGGAEKLGRA.

ATP-binding positions include 29 to 32 (TLGP), 86 to 90 (DGTTT), glycine 411, 476 to 478 (DAA), and aspartate 492.

This sequence belongs to the chaperonin (HSP60) family. As to quaternary structure, forms a cylinder of 14 subunits composed of two heptameric rings stacked back-to-back. Interacts with the co-chaperonin GroES.

It is found in the cytoplasm. The enzyme catalyses ATP + H2O + a folded polypeptide = ADP + phosphate + an unfolded polypeptide.. In terms of biological role, together with its co-chaperonin GroES, plays an essential role in assisting protein folding. The GroEL-GroES system forms a nano-cage that allows encapsulation of the non-native substrate proteins and provides a physical environment optimized to promote and accelerate protein folding. This chain is Chaperonin GroEL 4, found in Bradyrhizobium diazoefficiens (strain JCM 10833 / BCRC 13528 / IAM 13628 / NBRC 14792 / USDA 110).